We begin with the raw amino-acid sequence, 374 residues long: MDKGIILLAAGGTGGHLFPAEALAHELKASGYSVHLVTDSRAERFAGRFPADEIHVVASATIGSKNPVKLARSAWKLWTGLRAARRLISRLKPMAVVGFGGYPTVPPLLAATGMGVPTIIHEQNAVMGRANKMLASRVAAIAGGFLPEGTGAFAAKTVATGNPVRPAVLEAARVPYAPAGGDAPFHLVVFGGSQGAQFFSKAVPQAVCRLDDALRRRLKVTQQARPEDREGVIASYEKLDIPAEVSPFFTDMAGRIASAQLVICRSGASTVSEVSVIGRPAILVPYPYALDHDQAANAAALAAKGGARVIAQVELSAERLANILTDAMSNPDTLAQMAAGARQTGKAGAARLLALLVEAIASGSTVAKFKETRS.

Residues 13–15, asparagine 124, arginine 165, serine 193, and glutamine 294 contribute to the UDP-N-acetyl-alpha-D-glucosamine site; that span reads TGG.

Belongs to the glycosyltransferase 28 family. MurG subfamily.

Its subcellular location is the cell inner membrane. The enzyme catalyses di-trans,octa-cis-undecaprenyl diphospho-N-acetyl-alpha-D-muramoyl-L-alanyl-D-glutamyl-meso-2,6-diaminopimeloyl-D-alanyl-D-alanine + UDP-N-acetyl-alpha-D-glucosamine = di-trans,octa-cis-undecaprenyl diphospho-[N-acetyl-alpha-D-glucosaminyl-(1-&gt;4)]-N-acetyl-alpha-D-muramoyl-L-alanyl-D-glutamyl-meso-2,6-diaminopimeloyl-D-alanyl-D-alanine + UDP + H(+). It functions in the pathway cell wall biogenesis; peptidoglycan biosynthesis. Cell wall formation. Catalyzes the transfer of a GlcNAc subunit on undecaprenyl-pyrophosphoryl-MurNAc-pentapeptide (lipid intermediate I) to form undecaprenyl-pyrophosphoryl-MurNAc-(pentapeptide)GlcNAc (lipid intermediate II). The protein is UDP-N-acetylglucosamine--N-acetylmuramyl-(pentapeptide) pyrophosphoryl-undecaprenol N-acetylglucosamine transferase of Sinorhizobium medicae (strain WSM419) (Ensifer medicae).